The chain runs to 156 residues: SsrA-binding protein (156 aa).

Positions 134–156 are disordered; sequence YDKRETLKRKEQDREMARALRKR.

This sequence belongs to the SmpB family.

It localises to the cytoplasm. Required for rescue of stalled ribosomes mediated by trans-translation. Binds to transfer-messenger RNA (tmRNA), required for stable association of tmRNA with ribosomes. tmRNA and SmpB together mimic tRNA shape, replacing the anticodon stem-loop with SmpB. tmRNA is encoded by the ssrA gene; the 2 termini fold to resemble tRNA(Ala) and it encodes a 'tag peptide', a short internal open reading frame. During trans-translation Ala-aminoacylated tmRNA acts like a tRNA, entering the A-site of stalled ribosomes, displacing the stalled mRNA. The ribosome then switches to translate the ORF on the tmRNA; the nascent peptide is terminated with the 'tag peptide' encoded by the tmRNA and targeted for degradation. The ribosome is freed to recommence translation, which seems to be the essential function of trans-translation. The protein is SsrA-binding protein of Latilactobacillus sakei subsp. sakei (strain 23K) (Lactobacillus sakei subsp. sakei).